The primary structure comprises 534 residues: Coiled-coil domain-containing protein 183 (534 aa).

Coiled coils occupy residues 10–54 (EAQI…NLRR), 136–209 (DATK…DMTV), and 321–406 (RFLA…LLVI).

In Mus musculus (Mouse), this protein is Coiled-coil domain-containing protein 183 (Ccdc183).